The following is a 266-amino-acid chain: Glucosamine-6-phosphate deaminase (266 aa).

Residue Asp-72 is the Proton acceptor; for enolization step of the active site. Residue Asp-141 is the For ring-opening step of the active site. His-143 serves as the catalytic Proton acceptor; for ring-opening step. Glu-148 serves as the catalytic For ring-opening step.

The protein belongs to the glucosamine/galactosamine-6-phosphate isomerase family. NagB subfamily. In terms of assembly, homohexamer; trimer of disulfide-linked dimers.

The enzyme catalyses alpha-D-glucosamine 6-phosphate + H2O = beta-D-fructose 6-phosphate + NH4(+). It functions in the pathway amino-sugar metabolism; N-acetylneuraminate degradation; D-fructose 6-phosphate from N-acetylneuraminate: step 5/5. Its activity is regulated as follows. Allosterically activated by N-acetylglucosamine 6-phosphate (GlcNAc6P). In terms of biological role, catalyzes the reversible isomerization-deamination of glucosamine 6-phosphate (GlcN6P) to form fructose 6-phosphate (Fru6P) and ammonium ion. The protein is Glucosamine-6-phosphate deaminase of Escherichia coli O6:H1 (strain CFT073 / ATCC 700928 / UPEC).